We begin with the raw amino-acid sequence, 334 residues long: Protein-methionine-sulfoxide reductase catalytic subunit MsrP (334 aa).

The segment at residues 1-44 is a signal peptide (tat-type signal); sequence MKKIRPLTEADVTAESAFFMQRRQVLKALGISAAALSLPSTAQA. Mo-molybdopterin contacts are provided by residues N88, 91–92, C146, T181, N233, R238, and 249–251; these read YE and GIK.

The protein belongs to the MsrP family. In terms of assembly, heterodimer of a catalytic subunit (MsrP) and a heme-binding subunit (MsrQ). Mo-molybdopterin is required as a cofactor. In terms of processing, predicted to be exported by the Tat system. The position of the signal peptide cleavage has not been experimentally proven.

It localises to the periplasm. The enzyme catalyses L-methionyl-[protein] + a quinone + H2O = L-methionyl-(S)-S-oxide-[protein] + a quinol. The catalysed reaction is L-methionyl-[protein] + a quinone + H2O = L-methionyl-(R)-S-oxide-[protein] + a quinol. Functionally, part of the MsrPQ system that repairs oxidized periplasmic proteins containing methionine sulfoxide residues (Met-O), using respiratory chain electrons. Thus protects these proteins from oxidative-stress damage caused by reactive species of oxygen and chlorine generated by the host defense mechanisms. MsrPQ is essential for the maintenance of envelope integrity under bleach stress, rescuing a wide series of structurally unrelated periplasmic proteins from methionine oxidation, including the primary periplasmic chaperone SurA and the lipoprotein Pal. The catalytic subunit MsrP is non-stereospecific, being able to reduce both (R-) and (S-) diastereoisomers of methionine sulfoxide. This chain is Protein-methionine-sulfoxide reductase catalytic subunit MsrP, found in Salmonella dublin (strain CT_02021853).